A 533-amino-acid chain; its full sequence is Chromosomal replication initiator protein DnaA (533 aa).

The interval 1 to 72 is domain I, interacts with DnaA modulators; that stretch reads MNDFWQHCSA…DLARDFWNAP (72 aa). Residues 72-196 form a domain II region; it reads PIEVQFVLDP…EAADSMYERS (125 aa). The interval 83-120 is disordered; the sequence is AGQRSPAGATPLAPRAPLPSANPAPVAPGPASAPAVDA. Residues 96 to 110 show a composition bias toward pro residues; it reads PRAPLPSANPAPVAP. Low complexity predominate over residues 111 to 120; sequence GPASAPAVDA. The interval 197–413 is domain III, AAA+ region; the sequence is KLNPVLTFDN…GALRKILAYS (217 aa). Residues Gly241, Gly243, Lys244, and Thr245 each contribute to the ATP site. Residues 414–533 are domain IV, binds dsDNA; sequence KFHGREITIE…LHVLEQTLKG (120 aa).

It belongs to the DnaA family. As to quaternary structure, oligomerizes as a right-handed, spiral filament on DNA at oriC.

It is found in the cytoplasm. Its function is as follows. Plays an essential role in the initiation and regulation of chromosomal replication. ATP-DnaA binds to the origin of replication (oriC) to initiate formation of the DNA replication initiation complex once per cell cycle. Binds the DnaA box (a 9 base pair repeat at the origin) and separates the double-stranded (ds)DNA. Forms a right-handed helical filament on oriC DNA; dsDNA binds to the exterior of the filament while single-stranded (ss)DNA is stabiized in the filament's interior. The ATP-DnaA-oriC complex binds and stabilizes one strand of the AT-rich DNA unwinding element (DUE), permitting loading of DNA polymerase. After initiation quickly degrades to an ADP-DnaA complex that is not apt for DNA replication. Binds acidic phospholipids. The chain is Chromosomal replication initiator protein DnaA from Burkholderia pseudomallei (strain 1710b).